Here is a 178-residue protein sequence, read N- to C-terminus: Protamine-like protein (178 aa).

2 disordered regions span residues 1–27 and 77–178; these read PSTT…TVSD and SVVK…RAKK. Basic residues-rich tracts occupy residues 8–21 and 94–178; these read SPKR…RKRT and PRRR…RAKK. Residues 21 to 89 enclose the H15 domain; sequence TGPTVSDLIL…KAKGFYKLNK (69 aa).

In terms of tissue distribution, male germ cells.

It is found in the nucleus. Its subcellular location is the chromosome. In terms of biological role, replaces histones in the chromatin of sperm during the haploid phase of spermatogenesis. Compacts sperm DNA into a highly condensed, stable and inactive complex. The chain is Protamine-like protein from Mullus surmuletus (Striped red mullet).